Consider the following 507-residue polypeptide: RNA-binding protein Nova-1 (507 aa).

The segment at 1–44 is disordered; that stretch reads MMAAAPIQQNGTHTGVPIDLDPPDSRKRPLEAPPEAGSTKRTNT. The Bipartite nuclear localization signal motif lies at 27–43; it reads KRPLEAPPEAGSTKRTN. A KH 1 domain is found at 49-116; sequence QYFLKVLIPS…EALNAVHGFI (68 aa). Positions 139 to 171 are disordered; the sequence is QTTVNPDRIKQTLPSSPTTTKSSPSDPMTTSRA. Positions 150–169 are enriched in low complexity; it reads TLPSSPTTTKSSPSDPMTTS. S154 carries the phosphoserine modification. KH domains are found at residues 171-237 and 421-488; these read ANQV…VELI and KDVV…QYLI. The required for RNA binding stretch occupies residues 419-503; sequence GSKDVVEIAV…YEQGVRAANP (85 aa).

Interacts with PTBP2; the interaction is direct. As to expression, expressed in cerebellum, brain stem, hippocampus, and frontal cortex.

It localises to the nucleus. Its function is as follows. Functions to regulate alternative splicing in neurons by binding pre-mRNA in a sequence-specific manner to activate exon inclusion or exclusion. It binds specifically to the sequences 5'-YCAY-3' and regulates splicing in only a subset of regulated exons. Binding to an exonic 5'-YCAY-3' cluster changes the protein complexes assembled on pre-mRNA, blocking U1 snRNP binding and exon inclusion, whereas binding to an intronic 5'-YCAY-3' cluster enhances spliceosome assembly and exon inclusion. Binding to 5'-YCAY-3' clusters results in a local and asymmetric action to regulate spliceosome assembly and alternative splicing in neurons. Binding to an exonic 5'-YCAY-3' cluster changed the protein complexes assembled on pre-mRNA, blocking U1 snRNP (small nuclear ribonucleoprotein) binding and exon inclusion, whereas binding to an intronic 5'-YCAY-3' cluster enhanced spliceosome assembly and exon inclusion. With NOVA1, they perform unique biological functions in different brain areas and cell types. Autoregulates its own expression by acting as a splicing repressor. Acts to activate the inclusion of exon E3A in the glycine receptor alpha-2 chain and of exon E9 in gamma-aminobutyric-acid receptor gamma-2 subunit via a distal downstream UCAU-rich intronic splicing enhancer. Acts to regulate a novel glycine receptor alpha-2 chain splice variant (alpha-2N) in developing spinal cord. The polypeptide is RNA-binding protein Nova-1 (Homo sapiens (Human)).